Reading from the N-terminus, the 55-residue chain is Large ribosomal subunit protein bL32c (55 aa).

This sequence belongs to the bacterial ribosomal protein bL32 family.

The protein resides in the plastid. The protein localises to the chloroplast. The sequence is that of Large ribosomal subunit protein bL32c from Nicotiana sylvestris (Wood tobacco).